Consider the following 903-residue polypeptide: DNA gyrase subunit A (903 aa).

Positions 36-499 constitute a Topo IIA-type catalytic domain; the sequence is LPDARDGFKP…AIDDSDDEDL (464 aa). Residue Y124 is the O-(5'-phospho-DNA)-tyrosine intermediate of the active site. The short motif at 526–532 is the GyrA-box element; the sequence is QNRGGKG. The span at 881–895 shows a compositional bias: basic and acidic residues; that stretch reads VDDDSVVKDDAEKQE. The segment at 881-903 is disordered; the sequence is VDDDSVVKDDAEKQEIGPTETEE.

The protein belongs to the type II topoisomerase GyrA/ParC subunit family. As to quaternary structure, heterotetramer, composed of two GyrA and two GyrB chains. In the heterotetramer, GyrA contains the active site tyrosine that forms a transient covalent intermediate with DNA, while GyrB binds cofactors and catalyzes ATP hydrolysis.

It is found in the cytoplasm. The enzyme catalyses ATP-dependent breakage, passage and rejoining of double-stranded DNA.. In terms of biological role, a type II topoisomerase that negatively supercoils closed circular double-stranded (ds) DNA in an ATP-dependent manner to modulate DNA topology and maintain chromosomes in an underwound state. Negative supercoiling favors strand separation, and DNA replication, transcription, recombination and repair, all of which involve strand separation. Also able to catalyze the interconversion of other topological isomers of dsDNA rings, including catenanes and knotted rings. Type II topoisomerases break and join 2 DNA strands simultaneously in an ATP-dependent manner. The protein is DNA gyrase subunit A of Fibrobacter succinogenes (strain ATCC 19169 / S85).